The following is a 159-amino-acid chain: Probable E3 ubiquitin-protein ligase RHA1A (159 aa).

The RING-type; atypical zinc-finger motif lies at 86–130; the sequence is CTVCLSDFESDDKVRQLPKCGHVFHHYCLDRWIVDYNKMKCPVCR.

As to expression, predominantly expressed in stems.

It catalyses the reaction S-ubiquitinyl-[E2 ubiquitin-conjugating enzyme]-L-cysteine + [acceptor protein]-L-lysine = [E2 ubiquitin-conjugating enzyme]-L-cysteine + N(6)-ubiquitinyl-[acceptor protein]-L-lysine.. The protein operates within protein modification; protein ubiquitination. Its function is as follows. Probable E3 ubiquitin-protein ligase that may possess E3 ubiquitin ligase activity in vitro. This is Probable E3 ubiquitin-protein ligase RHA1A from Arabidopsis thaliana (Mouse-ear cress).